Consider the following 476-residue polypeptide: Cysteine--tRNA ligase (476 aa).

Zn(2+) is bound at residue Cys-36. A 'HIGH' region motif is present at residues 38-48 (PTVYDYAHIGN). Residues Cys-221, His-246, and Glu-250 each coordinate Zn(2+). Positions 278–282 (KMSKS) match the 'KMSKS' region motif. Lys-281 contacts ATP.

The protein belongs to the class-I aminoacyl-tRNA synthetase family. Monomer. Zn(2+) serves as cofactor.

The protein localises to the cytoplasm. It carries out the reaction tRNA(Cys) + L-cysteine + ATP = L-cysteinyl-tRNA(Cys) + AMP + diphosphate. This is Cysteine--tRNA ligase from Chlamydia caviae (strain ATCC VR-813 / DSM 19441 / 03DC25 / GPIC) (Chlamydophila caviae).